Here is a 529-residue protein sequence, read N- to C-terminus: DNA polymerase lambda (529 aa).

Residues 14 to 109 (DPEGMFAGMV…EKANEDLYVL (96 aa)) form the BRCT domain. The disordered stretch occupies residues 119–199 (PKKSLPAISG…ESTSVYKPPD (81 aa)). The span at 153 to 175 (SHSNTQGSPDSPTSCSVPSTSAS) shows a compositional bias: polar residues. A compositionally biased stretch (low complexity) spans 182 to 193 (ETPTSPQSESTS). The DNA-binding stretch occupies residues 213-227 (NIYRALGEDRRSFSY). His260 is a catalytic residue. Residues 295–298 (GPAT) are DNA-binding. DCTP is bound by residues Arg336, 367–370 (SYRR), and 376–379 (GDLD). An involved in primer binding region spans residues 370–379 (RGKATCGDLD). Positions 377, 379, and 444 each coordinate Mn(2+). A DNA-binding region spans residues 418-459 (EEGTDSGVDTYFGLCTYPGQELRRRIDFKVYPRDIYSFGLIA). Asn467 is a dCTP binding site.

Belongs to the DNA polymerase type-X family. In terms of assembly, interacts with the DNA repair proteins XRCC4 and LIG4. Interacts with HSP90-1. The cofactor is Mn(2+).

It localises to the nucleus. It carries out the reaction DNA(n) + a 2'-deoxyribonucleoside 5'-triphosphate = DNA(n+1) + diphosphate. Its function is as follows. Repair polymerase involved in base excision repair (BER) and responsible for repair of lesions that give rise to abasic (AP) sites in DNA. Has both DNA polymerase and terminal transferase activities. Has a 5'-deoxyribose-5-phosphate lyase (dRP lyase) activity. Involved in the repair of transposon-induced DNA double strand breaks (DSBs). Involved in repair of UV-B-mediated DNA damage during seedling development through an excision repair mechanism. Involved the repair of DSBs induced by high salinity and DNA cross-linking agent. Functions via the DNA non-homologous end joining (NHEJ) pathway. The chain is DNA polymerase lambda from Arabidopsis thaliana (Mouse-ear cress).